A 213-amino-acid polypeptide reads, in one-letter code: Dimethylamine corrinoid protein 3 (213 aa).

In terms of domain architecture, B12-binding N-terminal spans 1–91 (MADIEGLLHE…DLPAGAEKKL (91 aa)). A B12-binding domain is found at 92-213 (GVIVNGTVEG…AVAKAKELLL (122 aa)). Position 104 (His-104) interacts with methylcob(III)alamin.

Belongs to the methylamine corrinoid protein family.

It participates in one-carbon metabolism; methanogenesis from dimethylamine. Functionally, acts as a methyl group carrier between MtbB and MtbA. In Methanosarcina acetivorans (strain ATCC 35395 / DSM 2834 / JCM 12185 / C2A), this protein is Dimethylamine corrinoid protein 3 (mtbC3).